The chain runs to 227 residues: Ubiquitin-conjugating enzyme E2 6 (227 aa).

Residues 1-206 (MASKGAYKRL…NSKQSWVKSR (206 aa)) are Cytoplasmic-facing. Residues 5 to 163 (GAYKRLMKEY…FPELIDKNRE (159 aa)) form the UBC core domain. Residue C87 is the Glycyl thioester intermediate of the active site. A helical membrane pass occupies residues 207-225 (WSIAVLVFFALALARFFGA).

This sequence belongs to the ubiquitin-conjugating enzyme family.

Its subcellular location is the endoplasmic reticulum membrane. The catalysed reaction is S-ubiquitinyl-[E1 ubiquitin-activating enzyme]-L-cysteine + [E2 ubiquitin-conjugating enzyme]-L-cysteine = [E1 ubiquitin-activating enzyme]-L-cysteine + S-ubiquitinyl-[E2 ubiquitin-conjugating enzyme]-L-cysteine.. It functions in the pathway protein modification; protein ubiquitination. Its function is as follows. Catalyzes the covalent attachment of ubiquitin to other proteins. Functions in degradation of misfolded or regulated proteins localized in the endoplasmic reticulum (ER) lumen or membrane via the ubiquitin-proteasome system. Cognate E2 conjugating enzyme for the doa10 ubiquitin ligase complex, which is part of the ERAD-C pathway responsible for the rapid degradation of membrane proteins with misfolded cytoplasmic domains. In Schizosaccharomyces pombe (strain 972 / ATCC 24843) (Fission yeast), this protein is Ubiquitin-conjugating enzyme E2 6 (ubc6).